The primary structure comprises 503 residues: Sodium/hydrogen exchanger 3 (503 aa).

Topologically, residues 1 to 22 (MVIGLSTMLEKTEALFASDHAS) are cytoplasmic. Residues 23-43 (VVSMNLFVALLCACIVLGHLL) form a helical membrane-spanning segment. Residues 44–51 (EETRWMNE) lie on the Vacuolar side of the membrane. A glycan (N-linked (GlcNAc...) asparagine) is linked at N50. Residues 52 to 72 (SITALIIGSCTGIVILLISGG) traverse the membrane as a helical segment. Residues 73–76 (KSSR) are Cytoplasmic-facing. The segment at residues 77-97 (ILVFSEDLFFIYLLPPIIFNA) is an intramembrane region (helical). The Cytoplasmic portion of the chain corresponds to 98-109 (GFQVKKKQFFRN). The helical transmembrane segment at 110 to 130 (FMTIMLFGAIGTLISFVIISF) threads the bilayer. Residues 131 to 138 (GAKHLFEK) are Vacuolar-facing. Residues 139–159 (MNIGDLTIADYLAIGAIFSAT) traverse the membrane as a helical segment. Residues 160 to 174 (DSVCTLQVLNQDETP) lie on the Cytoplasmic side of the membrane. The chain crosses the membrane as a helical span at residues 175 to 195 (LLYSLVFGEGVVNDATSVVLF). The Vacuolar portion of the chain corresponds to 196-219 (NAIQRFDLTNINSAIALEFAGNFF). Residues 220–240 (YLFILSTALGVAAGLLSAFVI) traverse the membrane as a helical segment. Over 241 to 265 (KKLYIGRHSTDREVALMMLLAYLSY) the chain is Cytoplasmic. A helical membrane pass occupies residues 266–286 (MLAELFHLSSILTVFFCGIVM). The Vacuolar portion of the chain corresponds to 287–305 (SHYTWHNVTDKSKVTTKHT). N293 carries N-linked (GlcNAc...) asparagine glycosylation. A helical transmembrane segment spans residues 306–326 (FAAMSFLAEIFIFLYVGMDAL). The Cytoplasmic portion of the chain corresponds to 327-345 (DIEKWDVVRNSPGQSIGVS). The chain crosses the membrane as a helical span at residues 346-366 (SILLGLILLGRAAFVFPLSFL). At 367–383 (SNLTKSSPDEKIDLKKQ) the chain is on the vacuolar side. N-linked (GlcNAc...) asparagine glycosylation occurs at N368. The chain crosses the membrane as a helical span at residues 384-406 (VTIWWAGLMRGAVSMALAYNQFT). The Cytoplasmic portion of the chain corresponds to 407 to 416 (TSGHTKVLGN). The chain crosses the membrane as a helical span at residues 417–437 (AIMITSTITVVLFSTVVFGLL). Topologically, residues 438–503 (TKPLVKHLQP…FWKSPSRFTH (66 aa)) are vacuolar.

The protein belongs to the monovalent cation:proton antiporter 1 (CPA1) transporter (TC 2.A.36) family. As to expression, expressed in roots.

It localises to the vacuole membrane. The enzyme catalyses Na(+)(in) + H(+)(out) = Na(+)(out) + H(+)(in). It carries out the reaction K(+)(in) + H(+)(out) = K(+)(out) + H(+)(in). Functionally, may act in low affinity electroneutral exchange of protons for cations such as Na(+) or K(+) across membranes. May also exchange Li(+) and Cs(+) with a lower affinity. This chain is Sodium/hydrogen exchanger 3 (NHX3), found in Arabidopsis thaliana (Mouse-ear cress).